Reading from the N-terminus, the 362-residue chain is MPHGPGTSARPVRVLVVDDSALVRETLAAVLASDPGIEVIGAAGDPYAAVERMRRQAPDVITLDIEMPRMDGLTFLRKLMAQHPIPVVICSSLATAGAEPALRALECGAVEVVAKPRLGTRRFLEESRVRLCDAVKAAARAGPGRPRASAPLVQAKLTADAVLARPRSDAVLQTTERVVVVGASTGGTEALRELLAALPGDAPGLVIVQHMPEVFTAAFARRLDGLCAVAVKEAADGDAVVPGRALIAPGNRHTLLRRSGARYHVEVRDGPLVCRHRPSVDVLFRSAARYAGRNAVGVIMTGMGDDGARGLAELKRSGADTIAQDEATSVVFGMPREAIRLGAADRVLPLPAIPPELLRLCR.

Positions 13-130 (RVLVVDDSAL…RRFLEESRVR (118 aa)) constitute a Response regulatory domain. At D64 the chain carries 4-aspartylphosphate. One can recognise a CheB-type methylesterase domain in the interval 172–362 (LQTTERVVVV…IPPELLRLCR (191 aa)). Residues S184, H210, and D306 contribute to the active site.

This sequence belongs to the CheB family. Phosphorylated by CheA. Phosphorylation of the N-terminal regulatory domain activates the methylesterase activity.

It is found in the cytoplasm. It carries out the reaction [protein]-L-glutamate 5-O-methyl ester + H2O = L-glutamyl-[protein] + methanol + H(+). It catalyses the reaction L-glutaminyl-[protein] + H2O = L-glutamyl-[protein] + NH4(+). In terms of biological role, involved in chemotaxis. Part of a chemotaxis signal transduction system that modulates chemotaxis in response to various stimuli. Catalyzes the demethylation of specific methylglutamate residues introduced into the chemoreceptors (methyl-accepting chemotaxis proteins or MCP) by CheR. Also mediates the irreversible deamidation of specific glutamine residues to glutamic acid. This is Protein-glutamate methylesterase/protein-glutamine glutaminase 5 from Anaeromyxobacter dehalogenans (strain 2CP-C).